A 103-amino-acid polypeptide reads, in one-letter code: ATP-dependent Clp protease adapter protein ClpS (103 aa).

This sequence belongs to the ClpS family. As to quaternary structure, binds to the N-terminal domain of the chaperone ClpA.

Its function is as follows. Involved in the modulation of the specificity of the ClpAP-mediated ATP-dependent protein degradation. The sequence is that of ATP-dependent Clp protease adapter protein ClpS from Neisseria meningitidis serogroup A / serotype 4A (strain DSM 15465 / Z2491).